Reading from the N-terminus, the 471-residue chain is Steroid C26-monooxygenase (471 aa).

Gly238 contacts substrate. Cys412 contacts heme.

This sequence belongs to the cytochrome P450 family. Requires heme as cofactor.

The enzyme catalyses cholest-4-en-3-one + 6 reduced [2Fe-2S]-[ferredoxin] + 3 O2 + 5 H(+) = (25S)-3-oxocholest-4-en-26-oate + 6 oxidized [2Fe-2S]-[ferredoxin] + 4 H2O. Its function is as follows. Involved in the utilization of cholesterol as the sole carbon and energy source by degrading the side chain. Primarily catalyzes the sequential oxidation of the terminal methyl of cholest-4-en-3-one into (25S)-26-hydroxycholest-4-en-3-one (alcohol), (25S)-26-oxocholest-4-en-3-one (aldehyde), to finally yield the carboxylic acid (25S)-3-oxocholest-4-en-26-oate. Also able to sequentially oxidize cholesterol itself, not only cholest-4-en-3-one. The polypeptide is Steroid C26-monooxygenase (cyp125) (Rhodococcus jostii (strain RHA1)).